Reading from the N-terminus, the 160-residue chain is Glyoxalase domain-containing protein 5 (160 aa).

The VOC domain maps to 33–153; the sequence is RLDHLVLTVR…DQNLIEVSNY (121 aa).

The protein belongs to the glyoxalase I family.

The sequence is that of Glyoxalase domain-containing protein 5 (glod5) from Xenopus tropicalis (Western clawed frog).